The chain runs to 388 residues: Putative nickel insertion protein (388 aa).

It belongs to the LarC family.

The sequence is that of Putative nickel insertion protein from Syntrophobacter fumaroxidans (strain DSM 10017 / MPOB).